A 1068-amino-acid polypeptide reads, in one-letter code: Carbamoyl phosphate synthase large chain (1068 aa).

The interval 1 to 401 (MPLNKDIKKV…AFLKGIRSLE (401 aa)) is carboxyphosphate synthetic domain. The ATP site is built by R129, R169, G175, G176, K208, V210, E215, G241, I242, H243, Q284, and E298. Positions 133–327 (RNVMSRINEP…IAKVAAKIAL (195 aa)) constitute an ATP-grasp 1 domain. Mg(2+)-binding residues include Q284, E298, and N300. 3 residues coordinate Mn(2+): Q284, E298, and N300. Positions 402 to 549 (IGKYSLEHKK…YSTYDVYDEV (148 aa)) are oligomerization domain. The interval 550–932 (EVSKNKKVIV…ALYKGFIGAN (383 aa)) is carbamoyl phosphate synthetic domain. The region spanning 674–864 (DELLEKLQIS…IVDIATRVML (191 aa)) is the ATP-grasp 2 domain. Residues R710, K749, L751, E755, G780, V781, H782, S783, Q823, and E835 each coordinate ATP. Mg(2+) is bound by residues Q823, E835, and N837. Mn(2+) is bound by residues Q823, E835, and N837. The 136-residue stretch at 933 to 1068 (MSIKKEKGTI…ETLHIFDLSN (136 aa)) folds into the MGS-like domain. Residues 933–1068 (MSIKKEKGTI…ETLHIFDLSN (136 aa)) form an allosteric domain region.

Belongs to the CarB family. In terms of assembly, composed of two chains; the small (or glutamine) chain promotes the hydrolysis of glutamine to ammonia, which is used by the large (or ammonia) chain to synthesize carbamoyl phosphate. Tetramer of heterodimers (alpha,beta)4. Mg(2+) serves as cofactor. Requires Mn(2+) as cofactor.

It carries out the reaction hydrogencarbonate + L-glutamine + 2 ATP + H2O = carbamoyl phosphate + L-glutamate + 2 ADP + phosphate + 2 H(+). The enzyme catalyses hydrogencarbonate + NH4(+) + 2 ATP = carbamoyl phosphate + 2 ADP + phosphate + 2 H(+). The protein operates within amino-acid biosynthesis; L-arginine biosynthesis; carbamoyl phosphate from bicarbonate: step 1/1. Its pathway is pyrimidine metabolism; UMP biosynthesis via de novo pathway; (S)-dihydroorotate from bicarbonate: step 1/3. Its function is as follows. Large subunit of the glutamine-dependent carbamoyl phosphate synthetase (CPSase). CPSase catalyzes the formation of carbamoyl phosphate from the ammonia moiety of glutamine, carbonate, and phosphate donated by ATP, constituting the first step of 2 biosynthetic pathways, one leading to arginine and/or urea and the other to pyrimidine nucleotides. The large subunit (synthetase) binds the substrates ammonia (free or transferred from glutamine from the small subunit), hydrogencarbonate and ATP and carries out an ATP-coupled ligase reaction, activating hydrogencarbonate by forming carboxy phosphate which reacts with ammonia to form carbamoyl phosphate. In Clostridium botulinum (strain Loch Maree / Type A3), this protein is Carbamoyl phosphate synthase large chain.